The following is a 334-amino-acid chain: Adenine deaminase (334 aa).

Positions 14, 16, and 194 each coordinate Zn(2+). E197 acts as the Proton donor in catalysis. Residue D275 participates in Zn(2+) binding. Substrate is bound at residue D276.

It belongs to the metallo-dependent hydrolases superfamily. Adenosine and AMP deaminases family. Adenine deaminase type 2 subfamily. It depends on Zn(2+) as a cofactor.

It carries out the reaction adenine + H2O + H(+) = hypoxanthine + NH4(+). Its function is as follows. Catalyzes the hydrolytic deamination of adenine to hypoxanthine. Plays an important role in the purine salvage pathway and in nitrogen catabolism. The polypeptide is Adenine deaminase (Hahella chejuensis (strain KCTC 2396)).